The chain runs to 360 residues: Aminomethyltransferase (360 aa).

Belongs to the GcvT family. The glycine cleavage system is composed of four proteins: P, T, L and H.

The catalysed reaction is N(6)-[(R)-S(8)-aminomethyldihydrolipoyl]-L-lysyl-[protein] + (6S)-5,6,7,8-tetrahydrofolate = N(6)-[(R)-dihydrolipoyl]-L-lysyl-[protein] + (6R)-5,10-methylene-5,6,7,8-tetrahydrofolate + NH4(+). In terms of biological role, the glycine cleavage system catalyzes the degradation of glycine. The protein is Aminomethyltransferase of Bdellovibrio bacteriovorus (strain ATCC 15356 / DSM 50701 / NCIMB 9529 / HD100).